Here is a 477-residue protein sequence, read N- to C-terminus: 3-isopropylmalate dehydratase large subunit (477 aa).

[4Fe-4S] cluster-binding residues include cysteine 351, cysteine 411, and cysteine 414.

This sequence belongs to the aconitase/IPM isomerase family. LeuC type 1 subfamily. As to quaternary structure, heterodimer of LeuC and LeuD. Requires [4Fe-4S] cluster as cofactor.

It carries out the reaction (2R,3S)-3-isopropylmalate = (2S)-2-isopropylmalate. It functions in the pathway amino-acid biosynthesis; L-leucine biosynthesis; L-leucine from 3-methyl-2-oxobutanoate: step 2/4. Catalyzes the isomerization between 2-isopropylmalate and 3-isopropylmalate, via the formation of 2-isopropylmaleate. In Kineococcus radiotolerans (strain ATCC BAA-149 / DSM 14245 / SRS30216), this protein is 3-isopropylmalate dehydratase large subunit.